The following is a 304-amino-acid chain: Glutaminase (304 aa).

Ser-63, Asn-114, Glu-158, Asn-165, Tyr-189, Tyr-240, and Val-258 together coordinate substrate.

It belongs to the glutaminase family. Homotetramer.

It catalyses the reaction L-glutamine + H2O = L-glutamate + NH4(+). This chain is Glutaminase, found in Shewanella baltica (strain OS195).